A 177-amino-acid chain; its full sequence is Outer membrane lipoprotein Blc (177 aa).

A signal peptide spans 1-18 (MRILPVVAAVTAAFLVVA). The N-palmitoyl cysteine moiety is linked to residue Cys19. Cys19 carries the S-diacylglycerol cysteine lipid modification.

It belongs to the calycin superfamily. Lipocalin family. Homodimer.

It localises to the cell outer membrane. In terms of biological role, involved in the storage or transport of lipids necessary for membrane maintenance under stressful conditions. Displays a binding preference for lysophospholipids. This Citrobacter freundii protein is Outer membrane lipoprotein Blc.